Consider the following 414-residue polypeptide: Ribulose bisphosphate carboxylase large chain (414 aa).

2 residues coordinate substrate: Asn100 and Thr150. The active-site Proton acceptor is Lys152. Lys154 contacts substrate. Mg(2+)-binding residues include Lys178, Asp180, and Glu181. Lys178 is modified (N6-carboxylysine). His271 serves as the catalytic Proton acceptor. The substrate site is built by Arg272, His304, and Ser356.

The protein belongs to the RuBisCO large chain family. Type I subfamily. Heterohexadecamer of 8 large chains and 8 small chains; disulfide-linked. The disulfide link is formed within the large subunit homodimers. Mg(2+) is required as a cofactor. The disulfide bond which can form in the large chain dimeric partners within the hexadecamer appears to be associated with oxidative stress and protein turnover.

The protein resides in the plastid. The protein localises to the chloroplast. It carries out the reaction 2 (2R)-3-phosphoglycerate + 2 H(+) = D-ribulose 1,5-bisphosphate + CO2 + H2O. The enzyme catalyses D-ribulose 1,5-bisphosphate + O2 = 2-phosphoglycolate + (2R)-3-phosphoglycerate + 2 H(+). RuBisCO catalyzes two reactions: the carboxylation of D-ribulose 1,5-bisphosphate, the primary event in carbon dioxide fixation, as well as the oxidative fragmentation of the pentose substrate in the photorespiration process. Both reactions occur simultaneously and in competition at the same active site. In Blechnopsis orientalis (Fish fern), this protein is Ribulose bisphosphate carboxylase large chain (rbcL).